The chain runs to 60 residues: Metallothionein (60 aa).

M1 carries the post-translational modification N-acetylmethionine. The tract at residues 1-28 is beta; that stretch reads MDPCECSKTGTCNCGGSCTCKNCSCTTC. Residues C4, C6, C12, C14, C18, C20, C23, C25, C28, C32, C33, C35, C36, C40, C43, C47, C49, C54, C58, and C59 each coordinate a divalent metal cation. The segment at 29–60 is alpha; sequence NKSCCPCCPSGCPKCASGCVCKGKTCDTSCCQ.

It belongs to the metallothionein superfamily. Type 1 family.

In terms of biological role, metallothioneins have a high content of cysteine residues that bind various heavy metals. The chain is Metallothionein (mt) from Pleuronectes platessa (European plaice).